Consider the following 180-residue polypeptide: Bifunctional protein PyrR (180 aa).

A PRPP-binding motif is present at residues valine 101–threonine 113.

This sequence belongs to the purine/pyrimidine phosphoribosyltransferase family. PyrR subfamily. As to quaternary structure, homodimer and homohexamer; in equilibrium.

The catalysed reaction is UMP + diphosphate = 5-phospho-alpha-D-ribose 1-diphosphate + uracil. In terms of biological role, regulates transcriptional attenuation of the pyrimidine nucleotide (pyr) operon by binding in a uridine-dependent manner to specific sites on pyr mRNA. This disrupts an antiterminator hairpin in the RNA and favors formation of a downstream transcription terminator, leading to a reduced expression of downstream genes. Functionally, also displays a weak uracil phosphoribosyltransferase activity which is not physiologically significant. The protein is Bifunctional protein PyrR of Bacillus thuringiensis subsp. konkukian (strain 97-27).